A 276-amino-acid polypeptide reads, in one-letter code: Mitochondrial outer membrane protein porin 6 (276 aa).

This sequence belongs to the eukaryotic mitochondrial porin (TC 1.B.8.1) family.

It localises to the mitochondrion outer membrane. Its function is as follows. Forms a channel through the mitochondrial outer membrane that allows diffusion of small hydrophilic molecules. The channel adopts an open conformation at low or zero membrane potential and a closed conformation at potentials above 30-40 mV. The open state has a weak anion selectivity whereas the closed state is cation-selective. The sequence is that of Mitochondrial outer membrane protein porin 6 (VDAC6) from Oryza sativa subsp. japonica (Rice).